The primary structure comprises 99 residues: Transcription and mRNA export factor SUS1 (99 aa).

Belongs to the ENY2 family. Component of the nuclear pore complex (NPC)-associated TREX-2 complex (transcription and export complex 2), composed of at least SUS1, SAC3, THP1, SEM1, and CDC31. TREX-2 contains 2 SUS1 chains. The TREX-2 complex interacts with the nucleoporin NUP1. Component of the 1.8 MDa SAGA transcription coactivator-HAT complex. SAGA is built of 5 distinct domains with specialized functions. Within the SAGA complex, SUS1, SGF11, SGF73 and UBP8 form an additional subcomplex of SAGA called the DUB module (deubiquitination module). Interacts directly with THP1, SAC3, SGF11, and with the RNA polymerase II.

It localises to the nucleus. The protein localises to the nucleoplasm. It is found in the cytoplasm. Its subcellular location is the P-body. Functionally, involved in mRNA export coupled transcription activation by association with both the TREX-2 and the SAGA complexes. At the promoters, SAGA is required for recruitment of the basal transcription machinery. It influences RNA polymerase II transcriptional activity through different activities such as TBP interaction and promoter selectivity, interaction with transcription activators, and chromatin modification through histone acetylation and deubiquitination. Within the SAGA complex, participates in a subcomplex required for deubiquitination of H2B and for the maintenance of steady-state H3 methylation levels. The TREX-2 complex functions in docking export-competent ribonucleoprotein particles (mRNPs) to the nuclear entrance of the nuclear pore complex (nuclear basket). TREX-2 participates in mRNA export and accurate chromatin positioning in the nucleus by tethering genes to the nuclear periphery. May also be involved in cytoplasmic mRNA decay by interaction with components of P-bodies. In Eremothecium gossypii (strain ATCC 10895 / CBS 109.51 / FGSC 9923 / NRRL Y-1056) (Yeast), this protein is Transcription and mRNA export factor SUS1.